Consider the following 245-residue polypeptide: Haloacid dehalogenase-like hydrolase domain-containing protein At2g33255 (245 aa).

Position 2 is an N-acetylalanine (Thr2). The active-site Nucleophile is the Asp39. Mg(2+)-binding residues include Asp39, Asp41, and Asp186. Asp41 acts as the Proton donor in catalysis.

The protein belongs to the HAD-like hydrolase superfamily. DOG/GPP family. Mg(2+) serves as cofactor.

In Arabidopsis thaliana (Mouse-ear cress), this protein is Haloacid dehalogenase-like hydrolase domain-containing protein At2g33255.